The chain runs to 120 residues: Hydrogenase maturation factor HypA (120 aa).

A Ni(2+)-binding site is contributed by His-2. 4 residues coordinate Zn(2+): Cys-73, His-76, Cys-89, and Cys-92.

The protein belongs to the HypA/HybF family.

Involved in the maturation of [NiFe] hydrogenases. Required for nickel insertion into the metal center of the hydrogenase. This is Hydrogenase maturation factor HypA from Deinococcus radiodurans (strain ATCC 13939 / DSM 20539 / JCM 16871 / CCUG 27074 / LMG 4051 / NBRC 15346 / NCIMB 9279 / VKM B-1422 / R1).